A 281-amino-acid chain; its full sequence is NAD kinase (281 aa).

Asp-61 functions as the Proton acceptor in the catalytic mechanism. NAD(+) contacts are provided by residues 61–62, 134–135, Arg-145, Asp-164, 175–180, and Gln-234; these read DG, ND, and TAYSLS.

It belongs to the NAD kinase family. A divalent metal cation serves as cofactor.

It localises to the cytoplasm. It carries out the reaction NAD(+) + ATP = ADP + NADP(+) + H(+). Functionally, involved in the regulation of the intracellular balance of NAD and NADP, and is a key enzyme in the biosynthesis of NADP. Catalyzes specifically the phosphorylation on 2'-hydroxyl of the adenosine moiety of NAD to yield NADP. This Clostridium botulinum (strain Loch Maree / Type A3) protein is NAD kinase.